We begin with the raw amino-acid sequence, 178 residues long: MTKKEQALIEQYGKSLVEVASEHHSLDTLQADVLAILETFETTNLDQSLSSLAVPHAEKIKLLTLLKGNNSVYMNNFLNLILQNEREAYLYQMLQAVLNEIAIVSNQYDVTVTSSLPLTEEQKSRVRAVVAKKFAVTAGRLIEKVDPSLIGGFIISVNNKVIDTSIRRQLQAFKMNLK.

This sequence belongs to the ATPase delta chain family. As to quaternary structure, F-type ATPases have 2 components, F(1) - the catalytic core - and F(0) - the membrane proton channel. F(1) has five subunits: alpha(3), beta(3), gamma(1), delta(1), epsilon(1). F(0) has three main subunits: a(1), b(2) and c(10-14). The alpha and beta chains form an alternating ring which encloses part of the gamma chain. F(1) is attached to F(0) by a central stalk formed by the gamma and epsilon chains, while a peripheral stalk is formed by the delta and b chains.

It is found in the cell membrane. Functionally, f(1)F(0) ATP synthase produces ATP from ADP in the presence of a proton or sodium gradient. F-type ATPases consist of two structural domains, F(1) containing the extramembraneous catalytic core and F(0) containing the membrane proton channel, linked together by a central stalk and a peripheral stalk. During catalysis, ATP synthesis in the catalytic domain of F(1) is coupled via a rotary mechanism of the central stalk subunits to proton translocation. This protein is part of the stalk that links CF(0) to CF(1). It either transmits conformational changes from CF(0) to CF(1) or is implicated in proton conduction. In Streptococcus pyogenes serotype M3 (strain ATCC BAA-595 / MGAS315), this protein is ATP synthase subunit delta.